Consider the following 502-residue polypeptide: Protein MGF 505-5R (502 aa).

The protein belongs to the asfivirus MGF 505 family.

Plays a role in virus cell tropism, and may be required for efficient virus replication in macrophages. This Ornithodoros (relapsing fever ticks) protein is Protein MGF 505-5R.